Here is a 447-residue protein sequence, read N- to C-terminus: UDP-N-acetylmuramate--L-alanine ligase (447 aa).

Residue Gly108–Ser114 coordinates ATP.

This sequence belongs to the MurCDEF family.

The protein resides in the cytoplasm. The enzyme catalyses UDP-N-acetyl-alpha-D-muramate + L-alanine + ATP = UDP-N-acetyl-alpha-D-muramoyl-L-alanine + ADP + phosphate + H(+). It participates in cell wall biogenesis; peptidoglycan biosynthesis. In terms of biological role, cell wall formation. This is UDP-N-acetylmuramate--L-alanine ligase from Listeria monocytogenes serotype 4a (strain HCC23).